The sequence spans 512 residues: uncharacterized protein (512 aa).

12 helical membrane-spanning segments follow: residues 25-45 (GFYT…VICA), 55-75 (LLYP…PLIL), 96-116 (LVVC…VFLA), 123-143 (VVTG…LPAV), 148-168 (LLLT…LVIV), 183-203 (LLWL…FVGP), 238-258 (MTTY…SLRA), 263-283 (GSLH…SMLW), 294-314 (GLLL…MVAE), 329-349 (FLLA…WISV), 359-379 (LICV…VALG), and 386-406 (ATIW…VASL). The interval 428-512 (YRPATPNPIH…APLDAGQRIA (85 aa)) is disordered.

Its subcellular location is the cell membrane. This is an uncharacterized protein from Mycobacterium tuberculosis (strain CDC 1551 / Oshkosh).